The sequence spans 218 residues: Elongation factor Ts (218 aa).

The involved in Mg(2+) ion dislocation from EF-Tu stretch occupies residues 82 to 85 (TDFV).

The protein belongs to the EF-Ts family.

Its subcellular location is the cytoplasm. Functionally, associates with the EF-Tu.GDP complex and induces the exchange of GDP to GTP. It remains bound to the aminoacyl-tRNA.EF-Tu.GTP complex up to the GTP hydrolysis stage on the ribosome. This chain is Elongation factor Ts (tsf), found in Synechocystis sp. (strain ATCC 27184 / PCC 6803 / Kazusa).